Consider the following 190-residue polypeptide: MIKKYRKTKETEISVELEICGSGNAEIDTGIGFFDHMLESFTKHSLIDLKLICKGDLNVDFHHSVEDCGIVLGSALREAIYPIKKIERFGDSVVVMDEAAFSCALDLSNRAFLVFEGPKVGKVGEFDIELLEEFFRAVAFNAGITLHLIKLRGQNLHHLSEAAFKSFAVALRRALSKNERAEIPSTKGIL.

This sequence belongs to the imidazoleglycerol-phosphate dehydratase family.

Its subcellular location is the cytoplasm. The enzyme catalyses D-erythro-1-(imidazol-4-yl)glycerol 3-phosphate = 3-(imidazol-4-yl)-2-oxopropyl phosphate + H2O. The protein operates within amino-acid biosynthesis; L-histidine biosynthesis; L-histidine from 5-phospho-alpha-D-ribose 1-diphosphate: step 6/9. The chain is Imidazoleglycerol-phosphate dehydratase from Campylobacter hominis (strain ATCC BAA-381 / DSM 21671 / CCUG 45161 / LMG 19568 / NCTC 13146 / CH001A).